The chain runs to 760 residues: Golgin subfamily A member 5 (760 aa).

The Cytoplasmic portion of the chain corresponds to 1–727 (MSWFVDLAGK…IFLRRYPMAR (727 aa)). Over residues 95-111 (VSSTTPLGSSSKASSNF) the composition is skewed to polar residues. Disordered stretches follow at residues 95 to 114 (VSSTTPLGSSSKASSNFVRP), 126 to 216 (DFLN…SQAD), and 432 to 456 (TEEKQRAEDLQQQAKSSRSAAEYTK). A compositionally biased stretch (basic and acidic residues) spans 135–146 (QSEKKEVRRETV). A compositionally biased stretch (polar residues) spans 148–166 (KAFSPTGVSAQSQMPTVSL). Residues 174 to 201 (PSVTPTPSSTQGLSRNSSLGSLSSSSHS) are compositionally biased toward low complexity. A coiled-coil region spans residues 249–668 (QGQEHVISNL…LQGGQNSASH (420 aa)). Polar residues predominate over residues 441–450 (LQQQAKSSRS). Residues 728-748 (VFVIIYMALLHLWVMIVLLTY) traverse the membrane as a helical; Anchor for type IV membrane protein segment. The Extracellular portion of the chain corresponds to 749–760 (TPEMHHSHPDGR).

Its subcellular location is the golgi apparatus membrane. Its function is as follows. Involved in maintaining Golgi structure. Stimulates the formation of Golgi stacks and ribbons. Involved in intra-Golgi retrograde transport. The polypeptide is Golgin subfamily A member 5 (golga5) (Danio rerio (Zebrafish)).